The chain runs to 674 residues: Sodium/hydrogen exchanger 1 (674 aa).

The first 24 residues, 1–24, serve as a signal peptide directing secretion; it reads MKLNKSYILIVVLLLSLFYSSVSS. Residues 31–65 are disordered; it reads KSNNHYNSDNSNNDNKNININNNNDGDGDDDDDNN. A compositionally biased stretch (low complexity) spans 37–55; the sequence is NSDNSNNDNKNININNNND. Transmembrane regions (helical) follow at residues 120 to 140, 144 to 164, 175 to 195, 213 to 233, 275 to 297, 314 to 334, 336 to 356, 359 to 379, 401 to 421, 432 to 452, 460 to 480, and 499 to 519; these read TIIF…YFII, IPFV…GIVF, VVSF…IFET, MFAV…IYIV, LYIL…YSVV, VVAI…SLIL, WINI…FSYM, VLAG…GITL, TAAF…LTAH, WSIL…CFLL, IPWV…FAFS, and NTLL…YPLL. The tract at residues 591–674 is disordered; that stretch reads HELDSNPLRF…NKNNDTLPLI (84 aa). The segment covering 601–618 has biased composition (acidic residues); that stretch reads DDDEEDDDDEDLDFDSDL. The segment covering 627 to 657 has biased composition (low complexity); the sequence is DSIHQSDNNNNDNGNNNNNNNNIIINNNSQH. Over residues 662–674 the composition is skewed to polar residues; sequence GSNNKNNDTLPLI.

Belongs to the monovalent cation:proton antiporter 1 (CPA1) transporter (TC 2.A.36) family.

The protein resides in the membrane. LY294002, an inhibitor of the catalytic subunit of PI3-kinase, blocks NHE1-dependent (but not NHE1-independent) increase in intracellular pH in response to cAMP. Regulation of intracellular pH homeostasis in response to cAMP, which is essential for chemotaxis. Necessary for F-actin localization and the kinetics of actin polymerization during chemotaxis and cell polarity but not for directional sensing. The sequence is that of Sodium/hydrogen exchanger 1 (nhe1) from Dictyostelium discoideum (Social amoeba).